Here is a 139-residue protein sequence, read N- to C-terminus: Trafficking protein particle complex subunit 2-like protein (139 aa).

This sequence belongs to the TRAPP small subunits family. Sedlin subfamily.

The protein localises to the cytoplasm. The protein resides in the perinuclear region. Its subcellular location is the endoplasmic reticulum. It localises to the golgi apparatus. In terms of biological role, may play a role in vesicular transport from endoplasmic reticulum to Golgi. The polypeptide is Trafficking protein particle complex subunit 2-like protein (TRAPPC2L) (Taeniopygia guttata (Zebra finch)).